Reading from the N-terminus, the 280-residue chain is 4-diphosphocytidyl-2-C-methyl-D-erythritol kinase (280 aa).

Lysine 8 is an active-site residue. 91–101 contributes to the ATP binding site; the sequence is PVAAGLAGGST. Residue aspartate 133 is part of the active site.

It belongs to the GHMP kinase family. IspE subfamily.

It carries out the reaction 4-CDP-2-C-methyl-D-erythritol + ATP = 4-CDP-2-C-methyl-D-erythritol 2-phosphate + ADP + H(+). It functions in the pathway isoprenoid biosynthesis; isopentenyl diphosphate biosynthesis via DXP pathway; isopentenyl diphosphate from 1-deoxy-D-xylulose 5-phosphate: step 3/6. Functionally, catalyzes the phosphorylation of the position 2 hydroxy group of 4-diphosphocytidyl-2C-methyl-D-erythritol. The polypeptide is 4-diphosphocytidyl-2-C-methyl-D-erythritol kinase (Clostridium botulinum (strain Okra / Type B1)).